Reading from the N-terminus, the 153-residue chain is NADPH-dependent 7-cyano-7-deazaguanine reductase (153 aa).

A disordered region spans residues 1 to 26 (MVKIHDGASQLGANVAAPRSPEEATL). The active-site Thioimide intermediate is C51. The active-site Proton donor is D58. Residues 73–75 (VES) and 92–93 (HE) each bind substrate.

This sequence belongs to the GTP cyclohydrolase I family. QueF type 1 subfamily.

Its subcellular location is the cytoplasm. The catalysed reaction is 7-aminomethyl-7-carbaguanine + 2 NADP(+) = 7-cyano-7-deazaguanine + 2 NADPH + 3 H(+). It participates in tRNA modification; tRNA-queuosine biosynthesis. In terms of biological role, catalyzes the NADPH-dependent reduction of 7-cyano-7-deazaguanine (preQ0) to 7-aminomethyl-7-deazaguanine (preQ1). The protein is NADPH-dependent 7-cyano-7-deazaguanine reductase of Methylocella silvestris (strain DSM 15510 / CIP 108128 / LMG 27833 / NCIMB 13906 / BL2).